The following is a 493-amino-acid chain: Tripartite motif-containing protein 5 (493 aa).

A2 is subject to N-acetylalanine. The RING-type zinc-finger motif lies at 15–59; sequence CPICLELLTQPLSLDCGHSFCQACLTANHKKSMLDKGESSCPVCR. At S86 the chain carries Phosphoserine. Residues 90-132 form a B box-type zinc finger; sequence QKVDHCARHGEKLLLFCQEDGKVICWLCERSQEHRGHHTFLTE. Residues C95, H98, C117, and H123 each contribute to the Zn(2+) site. Residues 131–240 are a coiled coil; the sequence is TEEVAREYQV…LISDLERRLQ (110 aa). Positions 185–198 are required for interaction with GABARAP and for autophagy; sequence FEQLRDILDWEESN. The region spanning 281 to 493 is the B30.2/SPRY domain; it reads LKGMLEVFRE…VPMTLCSPSS (213 aa).

The protein belongs to the TRIM/RBCC family. In terms of assembly, can form homodimers and homotrimers. In addition to lower-order dimerization, also exhibits a higher-order multimerization and both low- and high-order multimerizations are essential for its restriction activity. Interacts with BTBD1 and BTBD2. Interacts with PSMC4, PSMC5, PSMD7 and HSPA8/HSC70. Interacts (via B30.2/SPRY domain) with HSPA1A/B. Interacts with PSMC2, MAP3K7/TAK1, TAB2 and TAB3. Interacts with SQSTM1. Interacts with TRIM6 and TRIM34. Interacts with ULK1 (phosphorylated form), GABARAP, GABARAPL1, GABARAPL2, MAP1LC3A, MAP1LC3C and BECN1. Degraded in a proteasome-independent fashion in the absence of viral infection but in a proteasome-dependent fashion following exposure to restriction sensitive virus. Post-translationally, autoubiquitinated in a RING finger- and UBE2D2-dependent manner. Monoubiquitinated by TRIM21. Deubiquitinated by Yersinia YopJ. Ubiquitination may not lead to proteasomal degradation.

The protein localises to the cytoplasm. The protein resides in the nucleus. The enzyme catalyses S-ubiquitinyl-[E2 ubiquitin-conjugating enzyme]-L-cysteine + [acceptor protein]-L-lysine = [E2 ubiquitin-conjugating enzyme]-L-cysteine + N(6)-ubiquitinyl-[acceptor protein]-L-lysine.. It participates in protein modification; protein ubiquitination. Its function is as follows. Capsid-specific restriction factor that prevents infection from non-host-adapted retroviruses. Blocks viral replication early in the life cycle, after viral entry but before reverse transcription. In addition to acting as a capsid-specific restriction factor, also acts as a pattern recognition receptor that activates innate immune signaling in response to the retroviral capsid lattice. Binding to the viral capsid triggers its E3 ubiquitin ligase activity, and in concert with the heterodimeric ubiquitin conjugating enzyme complex UBE2V1-UBE2N (also known as UBC13-UEV1A complex) generates 'Lys-63'-linked polyubiquitin chains, which in turn are catalysts in the autophosphorylation of the MAP3K7/TAK1 complex (includes TAK1, TAB2, and TAB3). Activation of the MAP3K7/TAK1 complex by autophosphorylation results in the induction and expression of NF-kappa-B and MAPK-responsive inflammatory genes, thereby leading to an innate immune response in the infected cell. Plays a role in regulating autophagy through activation of autophagy regulator BECN1 by causing its dissociation from its inhibitors BCL2 and TAB2. The polypeptide is Tripartite motif-containing protein 5 (TRIM5) (Pan paniscus (Pygmy chimpanzee)).